The sequence spans 77 residues: U8-lycotoxin-Ls1v (77 aa).

The first 20 residues, 1 to 20 (MKLIIFTGLVLFGIVSLIEA), serve as a signal peptide directing secretion. A propeptide spanning residues 21–26 (QAENEK) is cleaved from the precursor.

The protein belongs to the neurotoxin 19 (CSTX) family. 08 (U8-Lctx) subfamily. In terms of processing, contains 4 disulfide bonds. Expressed by the venom gland.

The protein localises to the secreted. This Lycosa singoriensis (Wolf spider) protein is U8-lycotoxin-Ls1v.